Consider the following 215-residue polypeptide: Pyridoxine/pyridoxamine 5'-phosphate oxidase (215 aa).

Substrate is bound by residues 9–12 and lysine 69; that span reads RRDY. FMN-binding positions include 64 to 69, 79 to 80, lysine 86, and glutamine 108; these read RVLLLK and FT. Substrate contacts are provided by tyrosine 126, arginine 130, and serine 134. FMN-binding positions include 143–144 and tryptophan 188; that span reads QS. 194–196 serves as a coordination point for substrate; sequence RLH. An FMN-binding site is contributed by arginine 198.

This sequence belongs to the pyridoxamine 5'-phosphate oxidase family. Homodimer. Requires FMN as cofactor.

The enzyme catalyses pyridoxamine 5'-phosphate + O2 + H2O = pyridoxal 5'-phosphate + H2O2 + NH4(+). The catalysed reaction is pyridoxine 5'-phosphate + O2 = pyridoxal 5'-phosphate + H2O2. It participates in cofactor metabolism; pyridoxal 5'-phosphate salvage; pyridoxal 5'-phosphate from pyridoxamine 5'-phosphate: step 1/1. It functions in the pathway cofactor metabolism; pyridoxal 5'-phosphate salvage; pyridoxal 5'-phosphate from pyridoxine 5'-phosphate: step 1/1. In terms of biological role, catalyzes the oxidation of either pyridoxine 5'-phosphate (PNP) or pyridoxamine 5'-phosphate (PMP) into pyridoxal 5'-phosphate (PLP). This chain is Pyridoxine/pyridoxamine 5'-phosphate oxidase, found in Pseudomonas putida (strain W619).